The sequence spans 77 residues: MKATVNIQDQFLNQLRKESIPVTVFLLNGFQLRGQVKGFDNFTVIVETEGRQQLVYKHAISTFAPQKNVQLKNEAEV.

Residues 9 to 69 (DQFLNQLRKE…ISTFAPQKNV (61 aa)) enclose the Sm domain.

It belongs to the Hfq family. In terms of assembly, homohexamer.

In terms of biological role, RNA chaperone that binds small regulatory RNA (sRNAs) and mRNAs to facilitate mRNA translational regulation in response to envelope stress, environmental stress and changes in metabolite concentrations. Also binds with high specificity to tRNAs. This is RNA-binding protein Hfq from Shouchella clausii (strain KSM-K16) (Alkalihalobacillus clausii).